Reading from the N-terminus, the 519-residue chain is Aldehyde dehydrogenase X, mitochondrial (519 aa).

Residues 1 to 19 (MLNARFLVPRLLCLQGRTT) constitute a mitochondrion transit peptide. Lys53 carries the post-translational modification N6-acetyllysine. Lys54 carries the N6-acetyllysine; alternate modification. N6-succinyllysine; alternate is present on Lys54. NAD(+) is bound at residue 264–269 (GSTEVG). The active-site Proton acceptor is Glu287. Residue Cys321 is the Nucleophile of the active site. An N6-acetyllysine; alternate mark is found at Lys366, Lys385, Lys401, and Lys428. Residues Lys366, Lys385, Lys401, and Lys428 each carry the N6-succinyllysine; alternate modification. Lys431 is subject to N6-acetyllysine.

It belongs to the aldehyde dehydrogenase family. Homotetramer.

It localises to the mitochondrion matrix. It catalyses the reaction an aldehyde + NAD(+) + H2O = a carboxylate + NADH + 2 H(+). It participates in alcohol metabolism; ethanol degradation; acetate from ethanol: step 2/2. Functionally, ALDHs play a major role in the detoxification of alcohol-derived acetaldehyde. They are involved in the metabolism of corticosteroids, biogenic amines, neurotransmitters, and lipid peroxidation. The protein is Aldehyde dehydrogenase X, mitochondrial (Aldh1b1) of Rattus norvegicus (Rat).